Here is a 176-residue protein sequence, read N- to C-terminus: NAD(P)H-quinone oxidoreductase subunit I, chloroplastic (176 aa).

4Fe-4S ferredoxin-type domains lie at 55–84 (GRIHFEFDKCIACEVCVRVCPINLPVVNWE) and 95–124 (QTYSIDFGVCIFCGNCVEYCPTNCLSMTEE). [4Fe-4S] cluster-binding residues include C64, C67, C70, C74, C104, C107, C110, and C114.

The protein belongs to the complex I 23 kDa subunit family. As to quaternary structure, NDH is composed of at least 16 different subunits, 5 of which are encoded in the nucleus. [4Fe-4S] cluster serves as cofactor.

The protein resides in the plastid. The protein localises to the chloroplast thylakoid membrane. The catalysed reaction is a plastoquinone + NADH + (n+1) H(+)(in) = a plastoquinol + NAD(+) + n H(+)(out). It carries out the reaction a plastoquinone + NADPH + (n+1) H(+)(in) = a plastoquinol + NADP(+) + n H(+)(out). Its function is as follows. NDH shuttles electrons from NAD(P)H:plastoquinone, via FMN and iron-sulfur (Fe-S) centers, to quinones in the photosynthetic chain and possibly in a chloroplast respiratory chain. The immediate electron acceptor for the enzyme in this species is believed to be plastoquinone. Couples the redox reaction to proton translocation, and thus conserves the redox energy in a proton gradient. This is NAD(P)H-quinone oxidoreductase subunit I, chloroplastic from Mesostigma viride (Green alga).